A 94-amino-acid polypeptide reads, in one-letter code: ESAT-6-like protein EsxL (94 aa).

This sequence belongs to the WXG100 family. ESAT-6 subfamily. Strongly interacts with EsxK to form a heterodimeric complex under reducing conditions.

The protein localises to the secreted. The polypeptide is ESAT-6-like protein EsxL (Mycobacterium tuberculosis (strain CDC 1551 / Oshkosh)).